A 101-amino-acid polypeptide reads, in one-letter code: Ribonuclease kappa-A (101 aa).

2 consecutive transmembrane segments (helical) span residues 13–33 and 68–88; these read ACGIVISVWGVIMLILLGVFF and VSYNCFIAAAIYIVLGGFSFC.

The protein belongs to the RNase K family.

It localises to the membrane. Endoribonuclease which preferentially cleaves ApU and ApG phosphodiester bonds. The sequence is that of Ribonuclease kappa-A (rnasek-a) from Xenopus laevis (African clawed frog).